The chain runs to 149 residues: Nucleoside diphosphate kinase (149 aa).

ATP is bound by residues K9, F57, R85, T91, R102, and N112. H115 acts as the Pros-phosphohistidine intermediate in catalysis.

The protein belongs to the NDK family. As to quaternary structure, homotetramer. Mg(2+) serves as cofactor.

It is found in the cytoplasm. The catalysed reaction is a 2'-deoxyribonucleoside 5'-diphosphate + ATP = a 2'-deoxyribonucleoside 5'-triphosphate + ADP. The enzyme catalyses a ribonucleoside 5'-diphosphate + ATP = a ribonucleoside 5'-triphosphate + ADP. Major role in the synthesis of nucleoside triphosphates other than ATP. The ATP gamma phosphate is transferred to the NDP beta phosphate via a ping-pong mechanism, using a phosphorylated active-site intermediate. The protein is Nucleoside diphosphate kinase of Nostoc sp. (strain PCC 7120 / SAG 25.82 / UTEX 2576).